The sequence spans 61 residues: Large ribosomal subunit protein uL30 (61 aa).

The segment at 1–20 is disordered; that stretch reads MSQKKVTVRQVGSPIGRKPE.

Belongs to the universal ribosomal protein uL30 family. In terms of assembly, part of the 50S ribosomal subunit.

In Hyphomonas neptunium (strain ATCC 15444), this protein is Large ribosomal subunit protein uL30.